The sequence spans 173 residues: Protein GrpE (173 aa).

Residues 1–20 (MQDEFKTDTPRTEAGSEKET) are compositionally biased toward basic and acidic residues. The segment at 1 to 23 (MQDEFKTDTPRTEAGSEKETMPS) is disordered.

It belongs to the GrpE family. Homodimer.

It localises to the cytoplasm. Functionally, participates actively in the response to hyperosmotic and heat shock by preventing the aggregation of stress-denatured proteins, in association with DnaK and GrpE. It is the nucleotide exchange factor for DnaK and may function as a thermosensor. Unfolded proteins bind initially to DnaJ; upon interaction with the DnaJ-bound protein, DnaK hydrolyzes its bound ATP, resulting in the formation of a stable complex. GrpE releases ADP from DnaK; ATP binding to DnaK triggers the release of the substrate protein, thus completing the reaction cycle. Several rounds of ATP-dependent interactions between DnaJ, DnaK and GrpE are required for fully efficient folding. The chain is Protein GrpE from Thiobacillus denitrificans (strain ATCC 25259 / T1).